The primary structure comprises 223 residues: MKKSLMALIVVGSFLLSACALRPDTIVNTPLTARPQAASTIAPPANGAIFQAAAYRPMFEDRRARLIGDTITIVINEKSSAGKQAGSAASKTGSVTASAPNVFGLLGSLTNRLSASGSNAIKYEDKGAVTSSNNFISTMTVTVIDVLSNGNLIVAGEKQVSLDKGSEFIRFSGVVDPSTVNSGNIVSSTQVADAKIEYRTNSTVDGAEVASMLARFFLSVLPL.

The first 18 residues, 1-18 (MKKSLMALIVVGSFLLSA), serve as a signal peptide directing secretion. Cysteine 19 carries the N-palmitoyl cysteine lipid modification. The S-diacylglycerol cysteine moiety is linked to residue cysteine 19.

Belongs to the FlgH family. As to quaternary structure, the basal body constitutes a major portion of the flagellar organelle and consists of four rings (L,P,S, and M) mounted on a central rod.

It is found in the cell outer membrane. The protein localises to the bacterial flagellum basal body. Functionally, assembles around the rod to form the L-ring and probably protects the motor/basal body from shearing forces during rotation. This is Flagellar L-ring protein from Herminiimonas arsenicoxydans.